A 312-amino-acid chain; its full sequence is Glyoxylate/hydroxypyruvate reductase A (312 aa).

The active site involves Arg227. His275 serves as the catalytic Proton donor.

It belongs to the D-isomer specific 2-hydroxyacid dehydrogenase family. GhrA subfamily.

The protein localises to the cytoplasm. The catalysed reaction is glycolate + NADP(+) = glyoxylate + NADPH + H(+). The enzyme catalyses (R)-glycerate + NAD(+) = 3-hydroxypyruvate + NADH + H(+). It catalyses the reaction (R)-glycerate + NADP(+) = 3-hydroxypyruvate + NADPH + H(+). Its function is as follows. Catalyzes the NADPH-dependent reduction of glyoxylate and hydroxypyruvate into glycolate and glycerate, respectively. The protein is Glyoxylate/hydroxypyruvate reductase A of Salmonella paratyphi B (strain ATCC BAA-1250 / SPB7).